A 361-amino-acid polypeptide reads, in one-letter code: 3-dehydroquinate synthase (361 aa).

This sequence belongs to the archaeal-type DHQ synthase family.

The enzyme catalyses 2-amino-2,3,7-trideoxy-D-lyxo-hept-6-ulosonate + NAD(+) + H2O = 3-dehydroquinate + NH4(+) + NADH + H(+). Catalyzes the oxidative deamination and cyclization of 2-amino-3,7-dideoxy-D-threo-hept-6-ulosonic acid (ADH) to yield 3-dehydroquinate (DHQ), which is fed into the canonical shikimic pathway of aromatic amino acid biosynthesis. The polypeptide is 3-dehydroquinate synthase (Methanococcus maripaludis (strain C5 / ATCC BAA-1333)).